The chain runs to 679 residues: Stress-70 protein, mitochondrial (679 aa).

The transit peptide at 1–46 directs the protein to the mitochondrion; the sequence is MISATRAAAARLVGTAASRTPAAARHQDGWNGLSHEAFRFVSRRDY. The interaction with NFS1 stretch occupies residues 1–432; the sequence is MISATRAAAA…IQGGVLAGDV (432 aa). ADP-binding residues include Thr-63 and Asn-64. Positions 63 to 431 are nucleotide-binding domain (NBD); sequence TNSCVAVMEG…AIQGGVLAGD (369 aa). Lys-76 carries the post-translational modification N6-acetyllysine. The residue at position 87 (Thr-87) is a Phosphothreonine. 2 positions are modified to N6-acetyllysine; alternate: Lys-135 and Lys-138. N6-succinyllysine; alternate is present on residues Lys-135 and Lys-138. Lys-143 carries the post-translational modification N6-acetyllysine. Lys-206 is modified (N6-acetyllysine; alternate). The residue at position 206 (Lys-206) is an N6-succinyllysine; alternate. Lys-206 is subject to N6-malonyllysine; alternate. Residues Lys-234 and Lys-288 each carry the N6-acetyllysine modification. Lys-300 carries the N6-acetyllysine; alternate modification. An N6-succinyllysine; alternate modification is found at Lys-300. Residues Glu-313, Lys-316, and Ser-320 each contribute to the ADP site. Lys-360 carries the post-translational modification N6-acetyllysine; alternate. Lys-360 carries the N6-succinyllysine; alternate modification. At Lys-368 the chain carries N6-succinyllysine. Residues Gly-388 and Arg-391 each coordinate ADP. Lys-394 bears the N6-succinyllysine mark. Ser-408 carries the phosphoserine modification. The segment at 432 to 441 is interdomain linker; the sequence is VTDVLLLDVT. Positions 432-679 are interaction with FXN and ISCU; it reads VTDVLLLDVT…QKEDQKEEKQ (248 aa). The tract at residues 442-679 is substrate-binding domain (SBD); sequence PLSLGIETLG…QKEDQKEEKQ (238 aa). Arg-513 is modified (omega-N-methylarginine). N6-acetyllysine; alternate is present on residues Lys-567 and Lys-600. Residues Lys-567 and Lys-600 each carry the N6-succinyllysine; alternate modification. Lys-610 carries the N6-succinyllysine modification. An N6-acetyllysine modification is found at Lys-612. Residue Lys-646 is modified to N6-acetyllysine; alternate. Lys-646 bears the N6-succinyllysine; alternate mark. The segment at 656 to 679 is disordered; that stretch reads ASEREGSGSSGTGEQKEDQKEEKQ. Residues 669-679 are compositionally biased toward basic and acidic residues; it reads EQKEDQKEEKQ.

This sequence belongs to the heat shock protein 70 family. Interacts strongly with the intermediate form of FXN and weakly with its mature form. Interacts with HSCB. Associates with the mitochondrial contact site and cristae organizing system (MICOS) complex, composed of at least MICOS10/MIC10, CHCHD3/MIC19, CHCHD6/MIC25, APOOL/MIC27, IMMT/MIC60, APOO/MIC23/MIC26 and QIL1/MIC13. This complex was also known under the names MINOS or MitOS complex. The MICOS complex associates with mitochondrial outer membrane proteins SAMM50, MTX1, MTX2 and DNAJC11, mitochondrial inner membrane protein TMEM11 and with HSPA9. Interacts with DNLZ, the interaction is required to prevent self-aggregation. Interacts with TESPA1. Interacts with PDPN. Interacts with NFU1, NFS1 and ISCU. Interacts with TP53; the interaction promotes TP53 degradation. Interacts (via SBD domain) with UBXN2A; the interaction with UBXN2A inhibits HSPA9/MOT-2 interaction with and degradation of TP53, thereby promotes TP53 translocation to the nucleus. Interacts with ITPR1 AND VDAC1; this interaction couples ITPR1 to VDAC1. Component of the TIM23 mitochondrial inner membrane pre-sequence translocase complex.

It is found in the mitochondrion. The protein resides in the nucleus. It localises to the nucleolus. Its subcellular location is the cytoplasm. The protein localises to the mitochondrion matrix. It catalyses the reaction ATP + H2O = ADP + phosphate + H(+). The chaperone activity is regulated by ATP-induced allosteric coupling of the nucleotide-binding (NBD) and substrate-binding (SBD) domains. ATP binding in the NBD leads to a conformational change in the NBD, which is transferred through the interdomain linker (IDL) to the substrate-binding domain (SBD). This elicits a reduced substrate affinity and a faster substrate exchange rate. Upon hydrolysis of ATP to ADP, the protein undergoes a conformational change that increases its affinity for substrate proteins. It cycles through repeated phases of ATP hydrolysis and nucleotide exchange, facilitating repeated cycles of substrate binding and release. Functions in collaboration with co-chaperones. Functions with the co-chaperone, DNLZ, to maintain solubility and regulate ATP hydrolysis. Nucleotide exchange factors, GRPEL1 and GRPEL2, accelerate nucleotide exchange. Functionally, mitochondrial chaperone that plays a key role in mitochondrial protein import, folding, and assembly. Plays an essential role in the protein quality control system, the correct folding of proteins, the re-folding of misfolded proteins, and the targeting of proteins for subsequent degradation. These processes are achieved through cycles of ATP binding, ATP hydrolysis, and ADP release, mediated by co-chaperones. In mitochondria, it associates with the TIM (translocase of the inner membrane) protein complex to assist in the import and folding of mitochondrial proteins. Plays an important role in mitochondrial iron-sulfur cluster (ISC) biogenesis, interacts with and stabilizes ISC cluster assembly proteins FXN, NFU1, NFS1 and ISCU. Regulates erythropoiesis via stabilization of ISC assembly. Regulates mitochondrial calcium-dependent apoptosis by coupling two calcium channels, ITPR1 and VDAC1, at the mitochondria-associated endoplasmic reticulum (ER) membrane to facilitate calcium transport from the ER lumen to the mitochondria intermembrane space, providing calcium for the downstream calcium channel MCU, which releases it into the mitochondrial matrix. Although primarily located in the mitochondria, it is also found in other cellular compartments. In the cytosol, it associates with proteins involved in signaling, apoptosis, or senescence. It may play a role in cell cycle regulation via its interaction with and promotion of degradation of TP53. May play a role in the control of cell proliferation and cellular aging. Protects against reactive oxygen species (ROS). Extracellular HSPA9 plays a cytoprotective role by preventing cell lysis following immune attack by the membrane attack complex by disrupting formation of the complex. The chain is Stress-70 protein, mitochondrial from Cricetulus griseus (Chinese hamster).